We begin with the raw amino-acid sequence, 680 residues long: MATATASRLAVPAPRTSPQAPGRRRPAAPLPSAPPRPRALSAAPRGRVVCPAAPASSPASTTDAGQDRLQKVPVSNIRNFSIIAHIDHGKSTLADKLLELTGTVQKREMKQQFLDNMDLERERGITIKLQAARMRYIMNDEPYCLNLIDTPGHVDFSYEVSRSLAACEGALLVVDASQGVEAQTLANVYLALENDLEIIPVLNKIDLPGAEPDRVAQEIEEIIGMDCSNAIRCSAKEGIGITEILDAIVTKIPPPQNTAISPLRALIFDSYYDPYRGVIVYFRVVDGSIKKGDKICFMASGKEYVADEIGVLSPNQMQVSELYAGEVGYLSASIRSVADARVGDTITHSSKRAECALPGYSQATPMVFCGLFPIDADQFEELREALEKLQLNDAALKAVTRFSMQFEPESSSAMGFGFRCGFLGLLHMEIVQERLEREYNLNLIITAPSVVYHVNLADGETVECSNPSLLPEPGKRRSIEEPYVKIDMLTPKEYIGPIMELGQERRGEFKEMNFITENRASVVYELPLAEMVGDFFDQLKSRSKGYASMEYSLIGYRESNLVKLDIQINGDPVEALSTIVHRDKAYSVGRALTQKLKELIPRQMFRVPIQACIGAKVIASEALSAIRKDVLSKCYGGDISRKKKLLKKQAEGKKRMKAIGRVDVPQEAFMAVLKLEKEVL.

A chloroplast-targeting transit peptide spans 1 to 51; that stretch reads MATATASRLAVPAPRTSPQAPGRRRPAAPLPSAPPRPRALSAAPRGRVVCP. Positions 1-68 are disordered; that stretch reads MATATASRLA…ASTTDAGQDR (68 aa). A compositionally biased stretch (pro residues) spans 28-37; it reads APLPSAPPRP. Low complexity predominate over residues 38-60; sequence RALSAAPRGRVVCPAAPASSPAS. The region spanning 75–256 is the tr-type G domain; it reads SNIRNFSIIA…AIVTKIPPPQ (182 aa). GTP is bound by residues 84–91, 149–153, and 203–206; these read AHIDHGKS, DTPGH, and NKID.

The protein belongs to the TRAFAC class translation factor GTPase superfamily. Classic translation factor GTPase family. LepA subfamily.

Its subcellular location is the plastid. It localises to the chloroplast. It carries out the reaction GTP + H2O = GDP + phosphate + H(+). Promotes chloroplast protein synthesis. May act as a fidelity factor of the translation reaction, by catalyzing a one-codon backward translocation of tRNAs on improperly translocated ribosomes. This is Translation factor GUF1 homolog, chloroplastic from Oryza sativa subsp. japonica (Rice).